Reading from the N-terminus, the 657-residue chain is Folic acid synthesis protein FOL1 (657 aa).

Residues 1 to 116 (MDKIIIKDLL…WPGVQIERTL (116 aa)) are DHNA. An HPPK region spans residues 149-274 (YLAFGSNLGD…FVLLPLSDIA (126 aa)). A Pterin-binding domain is found at 333–641 (TFIMGILNVT…DIPEIRDAML (309 aa)). The DHPS stretch occupies residues 335–657 (IMGILNVTPD…KPQRRYQIQK (323 aa)). Position 340 (Asn-340) interacts with Mg(2+). 3 residues coordinate (7,8-dihydropterin-6-yl)methyl diphosphate: Thr-380, Asp-416, and Asn-435. A disordered region spans residues 466–524 (LNNSNDSNSNSSINTNGEDNNNNNNNNNNNNNNNNNNNNNNNNNDDNDNDNRSKIKQKI). Over residues 467-509 (NNSNDSNSNSSINTNGEDNNNNNNNNNNNNNNNNNNNNNNNNN) the composition is skewed to low complexity. Basic and acidic residues predominate over residues 514–524 (NDNRSKIKQKI). (7,8-dihydropterin-6-yl)methyl diphosphate contacts are provided by residues Asp-547, Lys-583, and 629 to 631 (RIH).

This sequence in the N-terminal section; belongs to the DHNA family. The protein in the central section; belongs to the HPPK family. In the C-terminal section; belongs to the DHPS family. Mg(2+) serves as cofactor.

The enzyme catalyses 7,8-dihydroneopterin = 6-hydroxymethyl-7,8-dihydropterin + glycolaldehyde. It catalyses the reaction 6-hydroxymethyl-7,8-dihydropterin + ATP = (7,8-dihydropterin-6-yl)methyl diphosphate + AMP + H(+). It carries out the reaction (7,8-dihydropterin-6-yl)methyl diphosphate + 4-aminobenzoate = 7,8-dihydropteroate + diphosphate. Its pathway is cofactor biosynthesis; tetrahydrofolate biosynthesis; 2-amino-4-hydroxy-6-hydroxymethyl-7,8-dihydropteridine diphosphate from 7,8-dihydroneopterin triphosphate: step 3/4. It participates in cofactor biosynthesis; tetrahydrofolate biosynthesis; 2-amino-4-hydroxy-6-hydroxymethyl-7,8-dihydropteridine diphosphate from 7,8-dihydroneopterin triphosphate: step 4/4. The protein operates within cofactor biosynthesis; tetrahydrofolate biosynthesis; 7,8-dihydrofolate from 2-amino-4-hydroxy-6-hydroxymethyl-7,8-dihydropteridine diphosphate and 4-aminobenzoate: step 1/2. Catalyzes three sequential steps of tetrahydrofolate biosynthesis. The sequence is that of Folic acid synthesis protein FOL1 (fol1) from Dictyostelium discoideum (Social amoeba).